Reading from the N-terminus, the 433-residue chain is tRNA-queuosine alpha-mannosyltransferase (433 aa).

Residues 194–244 (PAAKSHIQTSSPSSYPDVEPPEKMLNVAGTNQSHEPTSVTPHQETASPLCG) are disordered. The segment covering 221-239 (AGTNQSHEPTSVTPHQETA) has biased composition (polar residues).

Belongs to the glycosyltransferase group 1 family. Glycosyltransferase 4 subfamily.

The protein resides in the cytoplasm. The protein localises to the nucleus. The enzyme catalyses queuosine(34) in tRNA(Asp) + GDP-alpha-D-mannose = O-4''-alpha-D-mannosylqueuosine(34) in tRNA(Asp) + GDP + H(+). Functionally, glycosyltransferase that specifically catalyzes mannosylation of cytoplasmic tRNA(Asp) modified with queuosine at position 34 (queuosine(34)). Mannosylates the cyclopentene moiety of queuosine(34) in tRNA(Asp) to form mannosyl-queuosine(34). Mannosylation of queuosine(34) in tRNA(Asp) is required to slow-down elongation at cognate codons, GAC and GAU, thereby regulating protein translation. The polypeptide is tRNA-queuosine alpha-mannosyltransferase (gtdc1) (Danio rerio (Zebrafish)).